The sequence spans 244 residues: UDP-2,3-diacylglucosamine hydrolase (244 aa).

Mn(2+) is bound by residues Asp-8, His-10, Asp-41, Asn-79, and His-114. 79–80 (NR) lines the substrate pocket. Positions 122, 160, 164, 167, and 195 each coordinate substrate. 2 residues coordinate Mn(2+): His-195 and His-197.

This sequence belongs to the LpxH family. Requires Mn(2+) as cofactor.

Its subcellular location is the cell inner membrane. It catalyses the reaction UDP-2-N,3-O-bis[(3R)-3-hydroxytetradecanoyl]-alpha-D-glucosamine + H2O = 2-N,3-O-bis[(3R)-3-hydroxytetradecanoyl]-alpha-D-glucosaminyl 1-phosphate + UMP + 2 H(+). It participates in glycolipid biosynthesis; lipid IV(A) biosynthesis; lipid IV(A) from (3R)-3-hydroxytetradecanoyl-[acyl-carrier-protein] and UDP-N-acetyl-alpha-D-glucosamine: step 4/6. Hydrolyzes the pyrophosphate bond of UDP-2,3-diacylglucosamine to yield 2,3-diacylglucosamine 1-phosphate (lipid X) and UMP by catalyzing the attack of water at the alpha-P atom. Involved in the biosynthesis of lipid A, a phosphorylated glycolipid that anchors the lipopolysaccharide to the outer membrane of the cell. This Hahella chejuensis (strain KCTC 2396) protein is UDP-2,3-diacylglucosamine hydrolase.